The following is a 292-amino-acid chain: 4-diphosphocytidyl-2-C-methyl-D-erythritol kinase (292 aa).

Lysine 13 is an active-site residue. 97 to 107 (PVAAGLAGGSS) is a binding site for ATP. Residue aspartate 139 is part of the active site.

Belongs to the GHMP kinase family. IspE subfamily.

The enzyme catalyses 4-CDP-2-C-methyl-D-erythritol + ATP = 4-CDP-2-C-methyl-D-erythritol 2-phosphate + ADP + H(+). The protein operates within isoprenoid biosynthesis; isopentenyl diphosphate biosynthesis via DXP pathway; isopentenyl diphosphate from 1-deoxy-D-xylulose 5-phosphate: step 3/6. Its function is as follows. Catalyzes the phosphorylation of the position 2 hydroxy group of 4-diphosphocytidyl-2C-methyl-D-erythritol. The protein is 4-diphosphocytidyl-2-C-methyl-D-erythritol kinase of Bacillus thuringiensis (strain Al Hakam).